The sequence spans 514 residues: 2,3-bisphosphoglycerate-independent phosphoglycerate mutase (514 aa).

2 residues coordinate Mn(2+): D14 and S64. Residue S64 is the Phosphoserine intermediate of the active site. Substrate contacts are provided by residues H125, 155–156 (RD), R187, R193, 263–266 (RADR), and K336. Mn(2+) is bound by residues D403, H407, D444, H445, and H463.

Belongs to the BPG-independent phosphoglycerate mutase family. Monomer. Mn(2+) serves as cofactor.

The catalysed reaction is (2R)-2-phosphoglycerate = (2R)-3-phosphoglycerate. It functions in the pathway carbohydrate degradation; glycolysis; pyruvate from D-glyceraldehyde 3-phosphate: step 3/5. In terms of biological role, catalyzes the interconversion of 2-phosphoglycerate and 3-phosphoglycerate. The chain is 2,3-bisphosphoglycerate-independent phosphoglycerate mutase from Escherichia coli O6:H1 (strain CFT073 / ATCC 700928 / UPEC).